We begin with the raw amino-acid sequence, 320 residues long: MSNTNKSEPNHSCKVVYASRVAETFVEQLKQHVNLFEFAPKLVGFLSNSDPAARMYADWTNKTCTEIGFQYELREVPKDDLEDAIVEANNDPSVNGIMIYFPVFNDGQDQYLQQVVSPDKDVEGLCHKYVMNMYHNIRHLDPEKTKKSILPCTPLAIVKILEYLGVYNKIINYGNRLYGKTITIVNRSEIVGRPLAALLANDGAKVYSVDIHNVQCFTRGAGIRSKKHDVADTNFKLEDVAPISDVIICGVPSANYKFPSNLVRDGAVCICFSSEKNFDAASLKEHAGIYVPSIGKVTIAMLLRNLIRLTSYQLNKPVDI.

Cysteine 152 is a catalytic residue. NAD(+) contacts are provided by residues 187–188 (RS) and 210–211 (DI).

This sequence belongs to the tetrahydrofolate dehydrogenase/cyclohydrolase family. As to quaternary structure, homodimer.

The protein resides in the cytoplasm. It is found in the nucleus. It catalyses the reaction (6R)-5,10-methylene-5,6,7,8-tetrahydrofolate + NAD(+) = (6R)-5,10-methenyltetrahydrofolate + NADH. The protein operates within one-carbon metabolism; tetrahydrofolate interconversion. Functionally, catalyzes oxidation of cytoplasmic one-carbon units for purine biosynthesis. This chain is Methylenetetrahydrofolate dehydrogenase [NAD(+)] (mtd1), found in Schizosaccharomyces pombe (strain 972 / ATCC 24843) (Fission yeast).